Here is a 190-residue protein sequence, read N- to C-terminus: Potassium-transporting ATPase KdpC subunit (190 aa).

The chain crosses the membrane as a helical span at residues 13–33 (VGFLLLTLMCGVVYPGIVTIF).

It belongs to the KdpC family. The system is composed of three essential subunits: KdpA, KdpB and KdpC.

Its subcellular location is the cell membrane. Functionally, part of the high-affinity ATP-driven potassium transport (or Kdp) system, which catalyzes the hydrolysis of ATP coupled with the electrogenic transport of potassium into the cytoplasm. This subunit acts as a catalytic chaperone that increases the ATP-binding affinity of the ATP-hydrolyzing subunit KdpB by the formation of a transient KdpB/KdpC/ATP ternary complex. The protein is Potassium-transporting ATPase KdpC subunit of Listeria monocytogenes serotype 4b (strain CLIP80459).